Reading from the N-terminus, the 320-residue chain is ATP-dependent 6-phosphofructokinase (320 aa).

Residue Gly-12 participates in ATP binding. Position 22-26 (Arg-22–Arg-26) interacts with ADP. ATP is bound by residues Arg-73–Phe-74 and Gly-103–Ser-106. Asp-104 provides a ligand contact to Mg(2+). Thr-126 to Asp-128 serves as a coordination point for substrate. Catalysis depends on Asp-128, which acts as the Proton acceptor. Arg-155 provides a ligand contact to ADP. Residues Arg-163 and Met-170–Arg-172 each bind substrate. Residues Gly-186–Glu-188, Lys-212, and Lys-214–His-216 contribute to the ADP site. Residues Glu-223, Arg-244, and His-250–Arg-253 each bind substrate.

The protein belongs to the phosphofructokinase type A (PFKA) family. ATP-dependent PFK group I subfamily. Prokaryotic clade 'B1' sub-subfamily. As to quaternary structure, homotetramer. Mg(2+) serves as cofactor.

The protein resides in the cytoplasm. The enzyme catalyses beta-D-fructose 6-phosphate + ATP = beta-D-fructose 1,6-bisphosphate + ADP + H(+). Its pathway is carbohydrate degradation; glycolysis; D-glyceraldehyde 3-phosphate and glycerone phosphate from D-glucose: step 3/4. Its activity is regulated as follows. Allosterically activated by ADP and other diphosphonucleosides, and allosterically inhibited by phosphoenolpyruvate. Its function is as follows. Catalyzes the phosphorylation of D-fructose 6-phosphate to fructose 1,6-bisphosphate by ATP, the first committing step of glycolysis. The sequence is that of ATP-dependent 6-phosphofructokinase from Photobacterium profundum (strain SS9).